We begin with the raw amino-acid sequence, 268 residues long: DNA repair protein RecO (268 aa).

This sequence belongs to the RecO family.

Its function is as follows. Involved in DNA repair and RecF pathway recombination. This Mycobacterium leprae (strain Br4923) protein is DNA repair protein RecO.